We begin with the raw amino-acid sequence, 1017 residues long: Integrator complex subunit 3 (1017 aa).

The segment at 952-1017 (EYEDSSKPPK…KGSAVGSDSD (66 aa)) is disordered. The span at 983 to 997 (NEEESVSSSASEEED) shows a compositional bias: acidic residues.

The protein belongs to the Integrator subunit 3 family. As to quaternary structure, component of the Integrator complex, composed of core subunits INTS1, INTS2, INTS3, INTS4, INTS5, INTS6, INTS7, INTS8, INTS9/RC74, INTS10, INTS11/CPSF3L, INTS12, INTS13, INTS14 and INTS15. The core complex associates with protein phosphatase 2A subunits PPP2CA and PPP2R1A, to form the Integrator-PP2A (INTAC) complex. Component of the SOSS complex.

The protein localises to the nucleus. The protein resides in the cytoplasm. Component of the integrator complex, a multiprotein complex that terminates RNA polymerase II (Pol II) transcription in the promoter-proximal region of genes. The integrator complex provides a quality checkpoint during transcription elongation by driving premature transcription termination of transcripts that are unfavorably configured for transcriptional elongation: the complex terminates transcription by (1) catalyzing dephosphorylation of the C-terminal domain (CTD) of Pol II subunit POLR2A/RPB1 and SUPT5H/SPT5, (2) degrading the exiting nascent RNA transcript via endonuclease activity and (3) promoting the release of Pol II from bound DNA. The integrator complex is also involved in terminating the synthesis of non-coding Pol II transcripts, such as enhancer RNAs (eRNAs), small nuclear RNAs (snRNAs), telomerase RNAs and long non-coding RNAs (lncRNAs). Within the integrator complex, INTS3 is involved in the post-termination step: INTS3 binds INTS7 in the open conformation of integrator complex and prevents the rebinding of Pol II to the integrator after termination cycle. Its function is as follows. Component of the SOSS complex, a multiprotein complex that functions downstream of the MRN complex to promote DNA repair and G2/M checkpoint. The SOSS complex associates with single-stranded DNA at DNA lesions and influences diverse endpoints in the cellular DNA damage response including cell-cycle checkpoint activation, recombinational repair and maintenance of genomic stability. The SOSS complex is required for efficient homologous recombination-dependent repair of double-strand breaks (DSBs) and ATM-dependent signaling pathways. In the SOSS complex, it is required for the assembly of the complex and for stabilization of the complex at DNA damage sites. This chain is Integrator complex subunit 3 (ints3), found in Danio rerio (Zebrafish).